The following is a 153-amino-acid chain: Riboflavin synthase (153 aa).

This sequence belongs to the DMRL synthase family.

It carries out the reaction 2 6,7-dimethyl-8-(1-D-ribityl)lumazine + H(+) = 5-amino-6-(D-ribitylamino)uracil + riboflavin. The protein operates within cofactor biosynthesis; riboflavin biosynthesis; riboflavin from 2-hydroxy-3-oxobutyl phosphate and 5-amino-6-(D-ribitylamino)uracil: step 2/2. This chain is Riboflavin synthase (ribC), found in Archaeoglobus fulgidus (strain ATCC 49558 / DSM 4304 / JCM 9628 / NBRC 100126 / VC-16).